Reading from the N-terminus, the 225-residue chain is Probable GTP-binding protein EngB (225 aa).

The EngB-type G domain maps to Gly-40 to Ala-224. GTP-binding positions include Gly-48–Ser-55, Gly-75–Glu-79, Asp-102–Gly-105, Thr-169–Asp-172, and Thr-203–Ser-205. Positions 55 and 77 each coordinate Mg(2+).

Belongs to the TRAFAC class TrmE-Era-EngA-EngB-Septin-like GTPase superfamily. EngB GTPase family. Mg(2+) serves as cofactor.

Its function is as follows. Necessary for normal cell division and for the maintenance of normal septation. This Chelativorans sp. (strain BNC1) protein is Probable GTP-binding protein EngB.